The primary structure comprises 643 residues: uncharacterized protein (643 aa).

Residues 179–199 (FKSSQLQQSPSPNKKSPSYSQ) show a composition bias toward low complexity. Disordered regions lie at residues 179–200 (FKSS…YSQV) and 349–377 (KRSN…STEN).

This is an uncharacterized protein from Caenorhabditis elegans.